The chain runs to 173 residues: Protein FAM180A (173 aa).

A signal peptide spans 1-17; the sequence is MSWKALTILLVFSSTQA.

This sequence belongs to the FAM180 family.

It localises to the secreted. The polypeptide is Protein FAM180A (Fam180a) (Mus musculus (Mouse)).